Consider the following 299-residue polypeptide: Oxygen-dependent coproporphyrinogen-III oxidase (299 aa).

Ser-92 serves as a coordination point for substrate. Residues His-96 and His-106 each coordinate a divalent metal cation. Residue His-106 is the Proton donor of the active site. Substrate is bound at residue 108-110; the sequence is NVR. His-145 and His-175 together coordinate a divalent metal cation. Residues 240 to 275 form an important for dimerization region; the sequence is YVEFNLVWDRGTLFGLQTGGRTESILMSMPPLVRWE. 258–260 lines the substrate pocket; it reads GGR.

Belongs to the aerobic coproporphyrinogen-III oxidase family. As to quaternary structure, homodimer. It depends on a divalent metal cation as a cofactor.

The protein resides in the cytoplasm. The enzyme catalyses coproporphyrinogen III + O2 + 2 H(+) = protoporphyrinogen IX + 2 CO2 + 2 H2O. It functions in the pathway porphyrin-containing compound metabolism; protoporphyrin-IX biosynthesis; protoporphyrinogen-IX from coproporphyrinogen-III (O2 route): step 1/1. In terms of biological role, involved in the heme biosynthesis. Catalyzes the aerobic oxidative decarboxylation of propionate groups of rings A and B of coproporphyrinogen-III to yield the vinyl groups in protoporphyrinogen-IX. This chain is Oxygen-dependent coproporphyrinogen-III oxidase, found in Salmonella heidelberg (strain SL476).